The chain runs to 111 residues: UPF0339 protein BP0521 (111 aa).

2 repeat units span residues 9–57 and 60–108. The segment at 86–111 is disordered; the sequence is TQARDNGIASVKSNAPGAPTKDQTQA.

Belongs to the UPF0339 family. Duplicated subfamily.

This chain is UPF0339 protein BP0521, found in Bordetella pertussis (strain Tohama I / ATCC BAA-589 / NCTC 13251).